We begin with the raw amino-acid sequence, 1080 residues long: Zorya protein ZorD (1080 aa).

The Helicase ATP-binding domain occupies 596–779; the sequence is LRSPEETAGC…WSLFDFAQPG (184 aa). The Helicase C-terminal domain maps to 904–1069; sequence KLNWLLKILA…DMLCATPDLS (166 aa).

Functionally, component of antiviral defense system Zorya type I, composed of ZorA, ZorB, ZorC and ZorD. Expression of Zorya type I in E.coli (strain MG1655) confers 10,000-fold resistance to phage SECphi27, 100-fold resistance to lambda, and 10-fold resistance to T7. While most T7 infected Zorya-containing cells undergo abortive infection, a minority produce viable phage progeny. These eventually accumulate to a high multiplicity of infection, leading to culture collapse by 2 hours after initial infection. ZorA and ZorB probably assemble in the cell inner membrane and exert their effect there. This may have ATPase activity. The chain is Zorya protein ZorD from Escherichia coli O139:H28 (strain E24377A / ETEC).